Consider the following 673-residue polypeptide: eEF1A lysine and N-terminal methyltransferase homolog (673 aa).

It belongs to the methyltransferase superfamily.

The catalysed reaction is L-lysyl-[protein] + S-adenosyl-L-methionine = N(6)-methyl-L-lysyl-[protein] + S-adenosyl-L-homocysteine + H(+). The enzyme catalyses N(6)-methyl-L-lysyl-[protein] + S-adenosyl-L-methionine = N(6),N(6)-dimethyl-L-lysyl-[protein] + S-adenosyl-L-homocysteine + H(+). It catalyses the reaction N-terminal glycyl-L-lysyl-L-glutamyl-[protein] + 3 S-adenosyl-L-methionine = N-terminal N,N,N-trimethyl-glycyl-L-lysyl-L-glutamyl-[protein] + 3 S-adenosyl-L-homocysteine + 3 H(+). Dual methyltransferase. It catalyzes N-terminal methylation of target proteins via its C-terminus. It catalyzes dimethylation on lysine residues of target proteins via its N-terminus. The polypeptide is eEF1A lysine and N-terminal methyltransferase homolog (Drosophila pseudoobscura pseudoobscura (Fruit fly)).